Reading from the N-terminus, the 270-residue chain is 5'-nucleotidase SurE (270 aa).

A divalent metal cation contacts are provided by D8, D9, S40, and N98.

This sequence belongs to the SurE nucleotidase family. A divalent metal cation is required as a cofactor.

The protein localises to the cytoplasm. The catalysed reaction is a ribonucleoside 5'-phosphate + H2O = a ribonucleoside + phosphate. In terms of biological role, nucleotidase that shows phosphatase activity on nucleoside 5'-monophosphates. In Cyanothece sp. (strain PCC 7425 / ATCC 29141), this protein is 5'-nucleotidase SurE.